A 211-amino-acid polypeptide reads, in one-letter code: DNA-directed RNA polymerases I, II, and III subunit RPABC1 (211 aa).

This sequence belongs to the archaeal Rpo5/eukaryotic RPB5 RNA polymerase subunit family. In terms of assembly, component of the RNA polymerase I (Pol I), RNA polymerase II (Pol II) and RNA polymerase III (Pol III) complexes consisting of at least 13, 12 and 17 subunits, respectively. In RNA Pol II, this subunit is present in 2-fold molar excess over the other subunits.

Its subcellular location is the nucleus. In terms of biological role, DNA-dependent RNA polymerase catalyzes the transcription of DNA into RNA using the four ribonucleoside triphosphates as substrates. Common component of RNA polymerases I, II and III which synthesize ribosomal RNA precursors, mRNA precursors and many functional non-coding RNAs, and small RNAs, such as 5S rRNA and tRNAs, respectively. Pol II is the central component of the basal RNA polymerase II transcription machinery. Pols are composed of mobile elements that move relative to each other. In Pol II, RPB5 is part of the lower jaw surrounding the central large cleft and thought to grab the incoming DNA template. Seems to be the major component in this process. The sequence is that of DNA-directed RNA polymerases I, II, and III subunit RPABC1 from Caenorhabditis briggsae.